The sequence spans 385 residues: Deoxyguanosinetriphosphate triphosphohydrolase-like protein (385 aa).

In terms of domain architecture, HD spans 75–204; the sequence is RLTHSLEVAQ…INFADEIAYN (130 aa).

It belongs to the dGTPase family. Type 2 subfamily.

The protein is Deoxyguanosinetriphosphate triphosphohydrolase-like protein of Geobacter sulfurreducens (strain ATCC 51573 / DSM 12127 / PCA).